The chain runs to 1023 residues: 1-phosphatidylinositol 4,5-bisphosphate phosphodiesterase beta-4 (1023 aa).

One can recognise a PI-PLC X-box domain in the interval 149–299 (QEMDHPLAHY…LKRKILIKKQ (151 aa)). Residues His164 and His211 contribute to the active site. The PI-PLC Y-box domain maps to 413–529 (LSTMINYAQP…GYLLKPDFMR (117 aa)). Residues 532 to 657 (DRTFDPFSET…SLRNEGNKPL (126 aa)) form the C2 domain. 2 disordered regions span residues 711-742 (ADVP…SELR) and 930-958 (KISM…VREL). Polar residues-rich tracts occupy residues 729 to 742 (AKAN…SELR) and 933 to 942 (MENSKAISQD). Thr734 carries the phosphothreonine modification. Residues 943–957 (KSIKNKAERERRVRE) show a composition bias toward basic and acidic residues.

It depends on Ca(2+) as a cofactor. In terms of processing, the N-terminus is blocked. As to expression, preferentially expressed in the retina.

The protein localises to the cell membrane. It carries out the reaction a 1,2-diacyl-sn-glycero-3-phospho-(1D-myo-inositol-4,5-bisphosphate) + H2O = 1D-myo-inositol 1,4,5-trisphosphate + a 1,2-diacyl-sn-glycerol + H(+). The enzyme catalyses a 1,2-diacyl-sn-glycero-3-phospho-(1D-myo-inositol) + H2O = 1D-myo-inositol 1-phosphate + a 1,2-diacyl-sn-glycerol + H(+). Functionally, activated phosphatidylinositol-specific phospholipase C enzymes catalyze the production of the second messenger molecules diacylglycerol (DAG) and inositol 1,4,5-trisphosphate (IP3) involved in G-protein coupled receptor signaling pathways. PLCB4 is a direct effector of the endothelin receptor signaling pathway that plays an essential role in lower jaw and middle ear structures development. This is 1-phosphatidylinositol 4,5-bisphosphate phosphodiesterase beta-4 (PLCB4) from Bos taurus (Bovine).